We begin with the raw amino-acid sequence, 238 residues long: Ribosomal RNA small subunit methyltransferase G (238 aa).

S-adenosyl-L-methionine contacts are provided by residues G77, F82, 128–129 (AE), and R147.

This sequence belongs to the methyltransferase superfamily. RNA methyltransferase RsmG family.

The protein resides in the cytoplasm. In terms of biological role, specifically methylates the N7 position of guanine in position 535 of 16S rRNA. The polypeptide is Ribosomal RNA small subunit methyltransferase G (Brevibacillus brevis (strain 47 / JCM 6285 / NBRC 100599)).